The following is a 138-amino-acid chain: Large ribosomal subunit protein uL16 (138 aa).

The span at 1-16 shows a compositional bias: basic residues; it reads MLIPRRVKHRKQHHPS. Residues 1-25 are disordered; sequence MLIPRRVKHRKQHHPSRSGAAKGGT.

The protein belongs to the universal ribosomal protein uL16 family. As to quaternary structure, part of the 50S ribosomal subunit.

In terms of biological role, binds 23S rRNA and is also seen to make contacts with the A and possibly P site tRNAs. The sequence is that of Large ribosomal subunit protein uL16 from Rhodococcus erythropolis (strain PR4 / NBRC 100887).